The primary structure comprises 82 residues: Quinohemoprotein amine dehydrogenase subunit gamma (82 aa).

The segment at residues 7–16 (CTTSFDPGWE) is a cross-link (4-cysteinyl-glutamic acid (Cys-Glu)). Cross-links (3-cysteinyl-aspartic acid (Cys-Asp)) lie at residues 27 to 33 (CQPMEAD) and 41 to 49 (CWWPAQVAD). Residue Asp-33 is the Proton acceptor of the active site. Positions 37 to 43 (CADPCWW) form a cross-link, 4'-cysteinyl-tryptophylquinone (Cys-Trp). Trp-43 carries the tryptophylquinone modification.

The protein belongs to the quinohemoprotein amine dehydrogenase subunit gamma family. In terms of assembly, heterotrimer of an alpha, a beta and a gamma subunit. Cysteine tryptophylquinone residue serves as cofactor. The cysteine tryptophylquinone (CTQ) is generated by oxidation of the indole ring of a tryptophan residue to form tryptophylquinone, followed by covalent cross-linking with a cysteine residue.

It is found in the periplasm. It catalyses the reaction 2 Fe(III)-[cytochrome c550] + an aliphatic amine + H2O = 2 Fe(II)-[cytochrome c550] + an aldehyde + NH4(+) + 2 H(+). Inhibited by carbonyl reagents such as hydrazine, hydroxylamine, phenylhydrazine and semicarbazide. Catalyzes the oxidative deamination of a wide range of primary aliphatic and aromatic amines. The physiological electron acceptor is the constitutive cytochrome c550. The protein is Quinohemoprotein amine dehydrogenase subunit gamma (qhnDH) of Paracoccus denitrificans.